A 500-amino-acid polypeptide reads, in one-letter code: Matrilin-1 (500 aa).

Residues 1 to 29 (MKVTSGPAFALCSLLLLLLLLLQVPDSLS) form the signal peptide. Residues 30-226 (LVPQPRGHLC…AKKFQEAFCV (197 aa)) form the VWFA 1 domain. Asn-80 is a glycosylation site (N-linked (GlcNAc...) asparagine). In terms of domain architecture, EGF-like spans 227-267 (VSDLCATGDHDCEQLCVSSPGSYTCACHEGFTLNSDGKTCN). Cystine bridges form between Cys-231/Cys-242, Cys-238/Cys-251, and Cys-253/Cys-266. One can recognise a VWFA 2 domain in the interval 268 to 457 (VCRGGGSGSA…GKKLQKQICV (190 aa)). Asn-348 carries an N-linked (GlcNAc...) asparagine glycan. Residues 471 to 499 (EAKVEGLLQALTRKLEAVSGRLAVLENRI) adopt a coiled-coil conformation.

Homotrimer. Part of a complex composed of MATN1 (via VWFA1 domain), type 2 collagens and type 6 collagens. Forms a complex (via covalent bonds) with ACAN; the interaction increases in abundance with increasing age of the organism via an increase in occupancy of MATN1 binding sites. Interacts with COMP. In terms of processing, N-glycosylated; reduces binding affinity for type 2 collagens. In terms of tissue distribution, expressed in femoral head articular cartilage. Expressed in the trachea and extraskeletal tissue around the eye.

The protein resides in the secreted. Its subcellular location is the extracellular space. It is found in the extracellular matrix. Its function is as follows. A major component of the extracellular matrix of non-articular cartilage. Binds to type 2 collagens and forms long concatenated protein networks as part of the extracellular matrix. Required for the network-like organization and bundling of collagen fibrils surrounding chondrocytes in the zones of maturation and hypertrophy. Required for mechanotransduction and adaption to mechanical loading in cartilage chondrocytes, resulting in an increase in expression of the extracellular matrix components ACAN and COL2A1. Acts as a moderator of angiogenesis in response to injury. This is Matrilin-1 from Mus musculus (Mouse).